The chain runs to 344 residues: GTP 3',8-cyclase (344 aa).

In terms of domain architecture, Radical SAM core spans 19-244 (PFGRTISYLR…MDLAESTGGP (226 aa)). Residue arginine 28 coordinates GTP. [4Fe-4S] cluster contacts are provided by cysteine 35 and cysteine 39. Position 41 (tyrosine 41) interacts with S-adenosyl-L-methionine. Cysteine 42 lines the [4Fe-4S] cluster pocket. Position 77 (arginine 77) interacts with GTP. Glycine 81 is an S-adenosyl-L-methionine binding site. Residue threonine 111 coordinates GTP. Serine 135 is a binding site for S-adenosyl-L-methionine. Lysine 171 provides a ligand contact to GTP. Methionine 205 provides a ligand contact to S-adenosyl-L-methionine. Residues cysteine 268 and cysteine 271 each contribute to the [4Fe-4S] cluster site. 273–275 (RVR) contributes to the GTP binding site. Cysteine 285 lines the [4Fe-4S] cluster pocket.

It belongs to the radical SAM superfamily. MoaA family. As to quaternary structure, monomer and homodimer. The cofactor is [4Fe-4S] cluster.

It carries out the reaction GTP + AH2 + S-adenosyl-L-methionine = (8S)-3',8-cyclo-7,8-dihydroguanosine 5'-triphosphate + 5'-deoxyadenosine + L-methionine + A + H(+). It participates in cofactor biosynthesis; molybdopterin biosynthesis. Catalyzes the cyclization of GTP to (8S)-3',8-cyclo-7,8-dihydroguanosine 5'-triphosphate. The protein is GTP 3',8-cyclase of Bradyrhizobium diazoefficiens (strain JCM 10833 / BCRC 13528 / IAM 13628 / NBRC 14792 / USDA 110).